A 453-amino-acid chain; its full sequence is CAAX prenyl protease 1 (453 aa).

Over Met1–Asn12 the chain is Lumenal. The helical transmembrane segment at Ile13 to Leu33 threads the bilayer. Residues Thr34–Lys89 are Cytoplasmic-facing. A helical membrane pass occupies residues Tyr90–Val110. Over Arg111–Ser121 the chain is Lumenal. A helical transmembrane segment spans residues Leu122 to Tyr142. The Cytoplasmic portion of the chain corresponds to Ser143–Lys167. A helical membrane pass occupies residues Ser168–Asp188. At Lys189–Tyr197 the chain is on the lumenal side. The helical transmembrane segment at Ile198–Met218 threads the bilayer. Over Pro219–His306 the chain is Cytoplasmic. Zn(2+) is bound at residue His297. Glu298 is an active-site residue. Zn(2+) is bound at residue His301. Residues Ile307–Ser327 form a helical membrane-spanning segment. Over Ile328 to Glu357 the chain is Lumenal. A helical membrane pass occupies residues Phe358–Met378. Over Gln379–Asn453 the chain is Cytoplasmic. Glu390 lines the Zn(2+) pocket. Asp394 functions as the Proton donor in the catalytic mechanism.

This sequence belongs to the peptidase M48A family. Zn(2+) serves as cofactor.

It localises to the endoplasmic reticulum membrane. It carries out the reaction Hydrolyzes the peptide bond -P2-(S-farnesyl or geranylgeranyl)C-P1'-P2'-P3'-COOH where P1' and P2' are amino acids with aliphatic side chains and P3' is any C-terminal residue.. Proteolytically removes the C-terminal three residues of farnesylated A-factor mating pheromone. Also acts to cleave the N-terminal extension of the pheromone. Does not act on Ras. This is CAAX prenyl protease 1 (STE24) from Saccharomyces cerevisiae (strain ATCC 204508 / S288c) (Baker's yeast).